Reading from the N-terminus, the 292-residue chain is Phosphotriesterase homology protein (292 aa).

The Zn(2+) site is built by H12, H14, and E125. 148 to 149 (HN) lines the beta-D-glucose pocket. Position 158 (H158) interacts with Zn(2+). Beta-D-glucose contacts are provided by G176, D178, and R181. H186 and D243 together coordinate Zn(2+). The beta-D-glucose site is built by D280 and R284.

It belongs to the metallo-dependent hydrolases superfamily. Phosphotriesterase family. Monomer. Zn(2+) serves as cofactor.

With respect to regulation, activity is higher in the enzyme containing Mn(2+) than that containing Zn(2+). Catalyzes the hydrolysis of phosphorylated glyceryl acetates in which the presence of a phosphate group is required for the enzymatic hydrolysis. Hydrolyzes a dibutyl glycerol derivative suggesting it acts on phosphoglycerol substrates with a butyrate leaving group. Also active with aromatic acetates and propionates. No activity with various sugar phosphates, with various nitrophenylphosphate or nitrophenylphosphonate derivatives, or with phosphorylated or non-phosphorylated sugar lactones tested. Does not hydrolyze non-phosphorylated carboxyesters with long chain leaving groups. No general esterase, aminopeptidase, sulfatase, phosphatase, carbonic anhydrase, phosphodiesterase, and phosphotriesterase activities detected when tested with the following non-specific substrates: p-nitrophenyl acetate, L-alanine nitroanilide, p-nitrophenyl sulfate, bis(p-nitrophenyl) phosphate, paraoxon, and p-nitrophenyl phosphate. This Escherichia coli (strain K12) protein is Phosphotriesterase homology protein.